The primary structure comprises 400 residues: EARP-interacting protein homolog (400 aa).

Residues 95–114 form a disordered region; sequence NNNSNNTNNNDNTNNNTNNN. The segment covering 96 to 114 has biased composition (low complexity); sequence NNSNNTNNNDNTNNNTNNN. WD repeat units lie at residues 138 to 178, 227 to 267, and 271 to 311; these read GHTG…NEPT, AHSE…DPVK, and GHNH…SAFN. The segment covering 314–333 has biased composition (low complexity); the sequence is NNISNSNEQQHSQQPNEQQP. The interval 314–348 is disordered; the sequence is NNISNSNEQQHSQQPNEQQPQQPPQPVKQKKNKRN. One copy of the WD 4 repeat lies at 358 to 397; it reads EHEDSVYNISWSSSNFLFASLSYDGRFVVNNVPKEYSDIL.

Belongs to the WD repeat EIPR1 family.

The sequence is that of EARP-interacting protein homolog from Dictyostelium discoideum (Social amoeba).